A 536-amino-acid polypeptide reads, in one-letter code: Dual specificity calcium/calmodulin-dependent 3',5'-cyclic nucleotide phosphodiesterase 1B (536 aa).

The tract at residues M1 to P20 is disordered. A phosphoserine mark is found at S7 and S15. Calmodulin-binding regions lie at residues P27–E47 and E118–R141. The region spanning V146–G503 is the PDEase domain. H223 (proton donor) is an active-site residue. Residues H227, H263, D264, and D370 each contribute to the Zn(2+) site. D264 serves as a coordination point for Mg(2+). Disordered regions lie at residues L447–P474 and Q494–D536. Positions K455–Q464 are enriched in polar residues. Phosphoserine occurs at positions 466 and 514.

This sequence belongs to the cyclic nucleotide phosphodiesterase family. PDE1 subfamily. Homodimer. Zn(2+) is required as a cofactor. Mg(2+) serves as cofactor.

The protein resides in the cytoplasm. It is found in the cytosol. It catalyses the reaction a nucleoside 3',5'-cyclic phosphate + H2O = a nucleoside 5'-phosphate + H(+). The catalysed reaction is 3',5'-cyclic GMP + H2O = GMP + H(+). The enzyme catalyses 3',5'-cyclic AMP + H2O = AMP + H(+). Type I PDE are activated by the binding of calmodulin in the presence of Ca(2+). Cyclic nucleotide phosphodiesterase with a dual specificity for the second messengers cAMP and cGMP, which are key regulators of many important physiological processes. Has a preference for cGMP as a substrate. The sequence is that of Dual specificity calcium/calmodulin-dependent 3',5'-cyclic nucleotide phosphodiesterase 1B from Homo sapiens (Human).